Consider the following 358-residue polypeptide: NADH-quinone oxidoreductase subunit H (358 aa).

8 consecutive transmembrane segments (helical) span residues 30-50 (VVIG…LIYM), 96-116 (FLYN…FSCL), 129-149 (VGVF…LLAG), 168-188 (IISY…LMGT), 201-221 (GWFI…YLIA), 265-285 (FIVA…LHIV), 297-317 (IPGF…LMWI), and 336-356 (YLVP…VFGL).

Belongs to the complex I subunit 1 family. NDH-1 is composed of 14 different subunits. Subunits NuoA, H, J, K, L, M, N constitute the membrane sector of the complex.

The protein localises to the cell inner membrane. The catalysed reaction is a quinone + NADH + 5 H(+)(in) = a quinol + NAD(+) + 4 H(+)(out). Functionally, NDH-1 shuttles electrons from NADH, via FMN and iron-sulfur (Fe-S) centers, to quinones in the respiratory chain. The immediate electron acceptor for the enzyme in this species is believed to be ubiquinone. Couples the redox reaction to proton translocation (for every two electrons transferred, four hydrogen ions are translocated across the cytoplasmic membrane), and thus conserves the redox energy in a proton gradient. This subunit may bind ubiquinone. This Bacteroides fragilis (strain ATCC 25285 / DSM 2151 / CCUG 4856 / JCM 11019 / LMG 10263 / NCTC 9343 / Onslow / VPI 2553 / EN-2) protein is NADH-quinone oxidoreductase subunit H.